The primary structure comprises 254 residues: Ciliary microtubule associated protein 1A (254 aa).

STPGR repeat units lie at residues 180-205 (PGPA…MAAR) and 216-241 (PGPG…FGIK). Residues 207–228 (EPPGDKTLKPGPGAHSPEKVTL) are disordered.

The protein belongs to the CIMAP family. As to quaternary structure, microtubule inner protein component of sperm flagellar doublet microtubules. Testis-specific (at protein level). Expression restricted to the germ cell fraction, absent in somatic cell fractions such as Sertoli and Leydig cells. Expression detected in the third week postpartum (23 days) after haploid germ cells developed, expression increased with age. Expressed in the tails of elongated spermatids sticking out toward the tubular lumen, and in cytoplasmic droplets still attached to the spermatid tail membrane. Expressed in the tails of mature sperm, from the connecting piece proximal to the head, along the middle and principal pieces, down to the distal end piece.

It localises to the cytoplasm. The protein localises to the cytoskeleton. It is found in the flagellum axoneme. Its function is as follows. Outer dense fibers are filamentous structures located on the outside of the axoneme in the midpiece and principal piece of the mammalian sperm tail. May help to maintain the passive elastic structures and elastic recoil of the sperm tail. This chain is Ciliary microtubule associated protein 1A (Cimap1a), found in Mus musculus (Mouse).